Consider the following 360-residue polypeptide: DNA polymerase IV (360 aa).

The UmuC domain occupies valine 8–glycine 191. Positions 12 and 110 each coordinate Mg(2+). Glutamate 111 is an active-site residue.

This sequence belongs to the DNA polymerase type-Y family. As to quaternary structure, monomer. It depends on Mg(2+) as a cofactor.

It is found in the cytoplasm. The enzyme catalyses DNA(n) + a 2'-deoxyribonucleoside 5'-triphosphate = DNA(n+1) + diphosphate. In terms of biological role, poorly processive, error-prone DNA polymerase involved in untargeted mutagenesis. Copies undamaged DNA at stalled replication forks, which arise in vivo from mismatched or misaligned primer ends. These misaligned primers can be extended by PolIV. Exhibits no 3'-5' exonuclease (proofreading) activity. May be involved in translesional synthesis. The protein is DNA polymerase IV of Methanoculleus marisnigri (strain ATCC 35101 / DSM 1498 / JR1).